The following is a 120-amino-acid chain: MFYWILLALAIVAEITGTLSMKWASISDDNTGFILMLVMISLSYIFLSFAVKKIALGVAYALWEGIGILLITLFSVMLFDEALSTMKIAGLATLVVGIVLIKSGTRKPTKQPKEQAHATV.

4 helical membrane-spanning segments follow: residues 1-21 (MFYW…TLSM), 31-51 (TGFI…SFAV), 54-74 (IALG…ITLF), and 81-101 (EALS…IVLI).

It belongs to the drug/metabolite transporter (DMT) superfamily. Small multidrug resistance (SMR) (TC 2.A.7.1) family. MdtJ subfamily. As to quaternary structure, forms a complex with MdtI.

Its subcellular location is the cell inner membrane. In terms of biological role, catalyzes the excretion of spermidine. This chain is Spermidine export protein MdtJ, found in Enterobacter sp. (strain 638).